The following is a 152-amino-acid chain: Gamma-glutamylaminecyclotransferase C (152 aa).

Residue 9–12 (YGSL) participates in substrate binding. The active-site Proton acceptor is E84.

The protein belongs to the gamma-glutamylcyclotransferase family.

The enzyme catalyses epsilon-(gamma-L-glutamyl)-L-lysine = 5-oxo-L-proline + L-lysine. Its function is as follows. May contribute to degradation of proteins cross-linked by transglutaminases by degrading the cross-link between a lysine and a glutamic acid residue. Catalyzes the formation of 5-oxo-L-proline from L-gamma-glutamyl-L-epsilon-lysine. The polypeptide is Gamma-glutamylaminecyclotransferase C (ggact.3) (Danio rerio (Zebrafish)).